An 862-amino-acid polypeptide reads, in one-letter code: Alanine--tRNA ligase (862 aa).

Zn(2+) is bound by residues His-552, His-556, Cys-653, and His-657.

Belongs to the class-II aminoacyl-tRNA synthetase family. It depends on Zn(2+) as a cofactor.

The protein localises to the cytoplasm. It carries out the reaction tRNA(Ala) + L-alanine + ATP = L-alanyl-tRNA(Ala) + AMP + diphosphate. In terms of biological role, catalyzes the attachment of alanine to tRNA(Ala) in a two-step reaction: alanine is first activated by ATP to form Ala-AMP and then transferred to the acceptor end of tRNA(Ala). Also edits incorrectly charged Ser-tRNA(Ala) and Gly-tRNA(Ala) via its editing domain. This chain is Alanine--tRNA ligase, found in Nitrosospira multiformis (strain ATCC 25196 / NCIMB 11849 / C 71).